Reading from the N-terminus, the 275-residue chain is Lectin DB58 (275 aa).

The N-terminal stretch at 1 to 22 (MASSTVSVVLSLFLLLLTQAYS) is a signal peptide. N-linked (GlcNAc...) asparagine glycans are attached at residues asparagine 34 and asparagine 101.

The protein belongs to the leguminous lectin family. As to quaternary structure, heterodimer, composed of an alpha and a beta subunit derived from a single precursor. In terms of processing, leu-264 is missing in a major portion of the beta subunit, suggesting an origin by sequential removal of amino acids rather than a processing by endoproteolytic cleavage.

Functionally, metalloglycoprotein, containing Ca, Mg, Mn, and Zn and the carbohydrates galactose, glucosamine, mannose, and fucose. It agglutinates erythrocytes of blood group A1. This is Lectin DB58 from Vigna unguiculata subsp. cylindrica (Horse gram).